Consider the following 474-residue polypeptide: Nucleobindin-1 (474 aa).

Residues 1–24 (MPPSGPRAALFLLPSLLLLRAVLA) form the signal peptide. S83 carries the post-translational modification Phosphoserine. A Phosphothreonine modification is found at T145. Residues 147–215 (EARDLELLIQ…QQRRHREHPK (69 aa)) adopt a coiled-coil conformation. A compositionally biased stretch (basic and acidic residues) spans 190–207 (SLGEEQRKEAERKLEEQQ). The tract at residues 190–218 (SLGEEQRKEAERKLEEQQRRHREHPKVNV) is disordered. The binds to GNAI2 and GNAI3 stretch occupies residues 225–318 (LKEVWEELDG…VTLEEFLAST (94 aa)). 2 consecutive EF-hand domains span residues 237–272 (PNRF…ELEK) and 289–324 (ERLR…KEFG). The Ca(2+) site is built by D250, N252, D254, E261, D302, N304, D306, and E313. Residues 300 to 330 (NVDTNQDRLVTLEEFLASTQRKEFGDTGEGW) carry the GBA motif. Positions 355-422 (AYTEEELRRF…RKQQQQSHNN (68 aa)) form a coiled coil. The segment at 382–474 (LSQETEALGR…EPPQLDSQHL (93 aa)) is disordered. Position 383 is a phosphoserine (S383). Residues 448–460 (DQKDVDASEKKVP) are compositionally biased toward basic and acidic residues. A Phosphoserine modification is found at S471.

The protein belongs to the nucleobindin family. In terms of assembly, interacts (via GBA motif) with guanine nucleotide-binding protein G(i) alpha subunits GNAI1, GNAI2 and GNAI3 with higher affinity for GNAI1 and GNAI3 than for GNAI2. Preferentially interacts with inactive rather than active GNAI3. Interaction with GNAI3 is inhibited when NUCB1 binds calcium, probably due to a conformational change which renders the GBA motif inaccessible. Expressed in bone where it is detected in the soft tissue in the center of the osteon and in the osteocyte lacuna (at protein level).

The protein localises to the golgi apparatus. It is found in the cis-Golgi network membrane. It localises to the cytoplasm. Its subcellular location is the secreted. Major calcium-binding protein of the Golgi which may have a role in calcium homeostasis. Acts as a non-receptor guanine nucleotide exchange factor which binds to and activates alpha subunits of guanine nucleotide-binding proteins (G proteins). The protein is Nucleobindin-1 (NUCB1) of Bos taurus (Bovine).